The following is a 446-amino-acid chain: Exodeoxyribonuclease 7 large subunit (446 aa).

It belongs to the XseA family. In terms of assembly, heterooligomer composed of large and small subunits.

It localises to the cytoplasm. It carries out the reaction Exonucleolytic cleavage in either 5'- to 3'- or 3'- to 5'-direction to yield nucleoside 5'-phosphates.. Functionally, bidirectionally degrades single-stranded DNA into large acid-insoluble oligonucleotides, which are then degraded further into small acid-soluble oligonucleotides. The sequence is that of Exodeoxyribonuclease 7 large subunit from Staphylococcus carnosus (strain TM300).